Reading from the N-terminus, the 279-residue chain is uncharacterized protein (279 aa).

The tract at residues 136 to 279 (TSNATEASEK…FTSDSSDEED (144 aa)) is disordered. The segment covering 228 to 238 (NNGNGAVYSDS) has biased composition (low complexity).

This is an uncharacterized protein from Invertebrate iridescent virus 3 (IIV-3).